We begin with the raw amino-acid sequence, 278 residues long: Serine/arginine-rich splicing factor SR34B (278 aa).

The RRM 1 domain maps to 7-82 (RTIYVGNLPG…HHLRVELAHG (76 aa)). Over residues 81–91 (HGGRRSSHDAR) the composition is skewed to basic and acidic residues. Disordered stretches follow at residues 81-121 (HGGR…SEYR) and 192-263 (EYDS…RSLS). Gly residues predominate over residues 95 to 107 (SGRGRGGRGGGDG). 2 stretches are compositionally biased toward basic and acidic residues: residues 108 to 120 (GGRERGPSRRSEY) and 192 to 201 (EYDSRRDSRS). Residues 120 to 195 (YRVVVSGLPS…EYVRVREYDS (76 aa)) enclose the RRM 2 domain. Serine 201, serine 203, serine 225, serine 231, serine 233, serine 242, serine 250, serine 259, and serine 263 each carry phosphoserine. Residues 207–243 (SYSKSRSRGRSPSRSRSRSRSRSKSRSPKAKSLRRSP) are compositionally biased toward basic residues.

Belongs to the splicing factor SR family. SR subfamily. As to quaternary structure, component of the spliceosome.

It is found in the nucleus speckle. The protein localises to the nucleus. Its subcellular location is the nucleoplasm. Probably involved in intron recognition and spliceosome assembly. This chain is Serine/arginine-rich splicing factor SR34B (SR34B), found in Arabidopsis thaliana (Mouse-ear cress).